Here is a 1354-residue protein sequence, read N- to C-terminus: Tensin homolog (1354 aa).

The Phosphatase tensin-type domain occupies 38-207 (MKDRKEGVQV…GYFSSLLSGR (170 aa)). The active-site Phosphocysteine intermediate is Cys-144. The C2 tensin-type domain maps to 212-337 (SDPLYLHNII…VTVELVVSHT (126 aa)). 7 disordered regions span residues 380–442 (EYSE…DVVP), 597–616 (STLQ…RTLN), 638–660 (SNTA…SVQL), 692–720 (DVRG…NNTP), 734–754 (SVTT…EADA), 794–879 (AANN…DRQR), and 1015–1035 (NGER…HNGY). A compositionally biased stretch (polar residues) spans 391–401 (SSKSANPINNN). Residues 408-417 (VGPPVPPKPS) show a composition bias toward pro residues. Polar residues-rich tracts occupy residues 704 to 720 (HNAS…NNTP), 734 to 747 (SVTT…STPS), and 794 to 804 (AANNDENQHNL). Residues 821–843 (AEFRREEERLRNTRSPYGEERWR) show a composition bias toward basic and acidic residues. Residues 1017–1033 (ERGGSGHAAGGGGGGHN) are compositionally biased toward gly residues. The SH2 domain occupies 1083–1187 (WYKPTISREQ…ALPTKLVLPD (105 aa)). Positions 1209–1353 (ACNVVYVGSV…NKVMLAQKNR (145 aa)) constitute a PTB domain.

It belongs to the PTEN phosphatase protein family. May interact (via SH2 domain) with receptor svh-2 (when tyrosine-phosphorylated). May interact (via C-terminus) with integrin pat-3. As to expression, expressed in ventral motor neurons, including ventral and dorsal D-type neurons, and in a subset of cells in the head.

It is found in the cell projection. The protein localises to the axon. The catalysed reaction is O-phospho-L-tyrosyl-[protein] + H2O = L-tyrosyl-[protein] + phosphate. Probable phosphatase which regulates axon regeneration after injury by linking the svh-2 and integrin signaling pathways. Functionally, not involved in axon regeneration after injury. The chain is Tensin homolog from Caenorhabditis elegans.